Here is a 253-residue protein sequence, read N- to C-terminus: DNA repair protein RecO (253 aa).

The protein belongs to the RecO family.

Its function is as follows. Involved in DNA repair and RecF pathway recombination. This chain is DNA repair protein RecO, found in Staphylococcus epidermidis (strain ATCC 35984 / DSM 28319 / BCRC 17069 / CCUG 31568 / BM 3577 / RP62A).